The primary structure comprises 161 residues: MSLVSQIIINADDELRYPTIGELQSIQNYLITGSNRIRIATIIRDKEKEIIQKASKQIFQLHPEYIAPGGNAAGSRKRSLCLRDYGWYLRLITYGVLAGDKDSIETIGIIGVREMYNSLGVPIIGMLDAIQCLKEASLEMLGQDDAKIISPYFDYIIRGMS.

Asn-71 carries the post-translational modification N4-methylasparagine. Cys-81 is a (2R,3E)-phycocyanobilin binding site.

The protein belongs to the phycobiliprotein family. Contains one covalently linked bilin chromophore.

The protein resides in the plastid. The protein localises to the chloroplast thylakoid membrane. Functionally, allophycocyanin is a photosynthetic bile pigment-protein complex with maximum absorption at approximately 650 nanometers. The protein is Allophycocyanin alpha-B chain (apcD) of Porphyra purpurea (Red seaweed).